A 215-amino-acid polypeptide reads, in one-letter code: uncharacterized protein (215 aa).

2 helical membrane passes run 40 to 60 and 72 to 92; these read VLFP…FCSL and LIWF…VGYL.

The protein localises to the mitochondrion membrane. This is an uncharacterized protein from Arabidopsis thaliana (Mouse-ear cress).